Here is a 247-residue protein sequence, read N- to C-terminus: Protein NipSnap homolog 3B (247 aa).

N6-succinyllysine is present on residues Lys45 and Lys57.

It belongs to the NipSnap family.

This is Protein NipSnap homolog 3B (NIPSNAP3B) from Homo sapiens (Human).